Consider the following 1141-residue polypeptide: Myosin-binding protein C, fast-type (1141 aa).

The interval 1 to 62 (MPEAKPAAKK…VFLKKPDSVS (62 aa)) is disordered. Positions 13–39 (KGKDAPKGAPKEAPPKEAPAEAPKEAP) are enriched in basic and acidic residues. Ig-like C2-type domains are found at residues 50–153 (PTGV…NIDV), 255–344 (SAAF…VKEP), 345–437 (PVLI…VEEK), 438–538 (QLEV…KQEP), and 539–638 (PKIH…VVDV). 2 consecutive Fibronectin type-III domains span residues 641–737 (PPEA…IAPT) and 739–834 (EPLH…IREI). The 95-residue stretch at 838 to 932 (PKIRLPRHLR…ATIRIRVVEK (95 aa)) folds into the Ig-like C2-type 6 domain. The Fibronectin type-III 3 domain maps to 935 to 1030 (PPINVMVKEV…SKNTARILKT (96 aa)). Residues 1048 to 1141 (PKFLTPLIDR…ECKLEVRVPQ (94 aa)) enclose the Ig-like C2-type 7 domain.

The protein belongs to the immunoglobulin superfamily. MyBP family.

In terms of biological role, thick filament-associated protein located in the crossbridge region of vertebrate striated muscle a bands. In vitro it binds MHC, F-actin and native thin filaments, and modifies the activity of actin-activated myosin ATPase. It may modulate muscle contraction or may play a more structural role. The polypeptide is Myosin-binding protein C, fast-type (MYBPC2) (Homo sapiens (Human)).